We begin with the raw amino-acid sequence, 456 residues long: Antigen Lp49 (456 aa).

An N-terminal signal peptide occupies residues M1 to S34. C346 and C347 form a disulfide bridge.

It localises to the cell outer membrane. May be involved in virulence. Binds human plasminogen (PLG) and stimulates its proteolytic cleavage to enzymatically active plasmin in the presence of an urokinase-type PLG activator in vitro. Activated plasmin has proteolytic activity which may help the bacteria to spread throughout the host by degrading extracellular matrix components, facilitating tissue penetration and invasion. The sequence is that of Antigen Lp49 from Leptospira interrogans serogroup Icterohaemorrhagiae serovar copenhageni (strain Fiocruz L1-130).